The following is a 923-amino-acid chain: Isoleucine--tRNA ligase (923 aa).

Residues 57–67 (PYANGDIHIGT) carry the 'HIGH' region motif. E561 contributes to the L-isoleucyl-5'-AMP binding site. The 'KMSKS' region signature appears at 602-606 (AMHKS). Residue K605 coordinates ATP. C895, C898, C915, and C918 together coordinate Zn(2+).

This sequence belongs to the class-I aminoacyl-tRNA synthetase family. IleS type 1 subfamily. As to quaternary structure, monomer. Requires Zn(2+) as cofactor.

The protein localises to the cytoplasm. The catalysed reaction is tRNA(Ile) + L-isoleucine + ATP = L-isoleucyl-tRNA(Ile) + AMP + diphosphate. Functionally, catalyzes the attachment of isoleucine to tRNA(Ile). As IleRS can inadvertently accommodate and process structurally similar amino acids such as valine, to avoid such errors it has two additional distinct tRNA(Ile)-dependent editing activities. One activity is designated as 'pretransfer' editing and involves the hydrolysis of activated Val-AMP. The other activity is designated 'posttransfer' editing and involves deacylation of mischarged Val-tRNA(Ile). The chain is Isoleucine--tRNA ligase from Brachyspira hyodysenteriae (strain ATCC 49526 / WA1).